The following is a 218-amino-acid chain: Thiamine-phosphate synthase (218 aa).

4-amino-2-methyl-5-(diphosphooxymethyl)pyrimidine-binding positions include 43–47 (QLRDK) and N75. Mg(2+)-binding residues include D76 and D95. Position 114 (S114) interacts with 4-amino-2-methyl-5-(diphosphooxymethyl)pyrimidine. 141–143 (TPT) is a 2-[(2R,5Z)-2-carboxy-4-methylthiazol-5(2H)-ylidene]ethyl phosphate binding site. K144 serves as a coordination point for 4-amino-2-methyl-5-(diphosphooxymethyl)pyrimidine. Position 172 (G172) interacts with 2-[(2R,5Z)-2-carboxy-4-methylthiazol-5(2H)-ylidene]ethyl phosphate.

The protein belongs to the thiamine-phosphate synthase family. Mg(2+) serves as cofactor.

The enzyme catalyses 2-[(2R,5Z)-2-carboxy-4-methylthiazol-5(2H)-ylidene]ethyl phosphate + 4-amino-2-methyl-5-(diphosphooxymethyl)pyrimidine + 2 H(+) = thiamine phosphate + CO2 + diphosphate. The catalysed reaction is 2-(2-carboxy-4-methylthiazol-5-yl)ethyl phosphate + 4-amino-2-methyl-5-(diphosphooxymethyl)pyrimidine + 2 H(+) = thiamine phosphate + CO2 + diphosphate. It carries out the reaction 4-methyl-5-(2-phosphooxyethyl)-thiazole + 4-amino-2-methyl-5-(diphosphooxymethyl)pyrimidine + H(+) = thiamine phosphate + diphosphate. It participates in cofactor biosynthesis; thiamine diphosphate biosynthesis; thiamine phosphate from 4-amino-2-methyl-5-diphosphomethylpyrimidine and 4-methyl-5-(2-phosphoethyl)-thiazole: step 1/1. Its function is as follows. Condenses 4-methyl-5-(beta-hydroxyethyl)thiazole monophosphate (THZ-P) and 2-methyl-4-amino-5-hydroxymethyl pyrimidine pyrophosphate (HMP-PP) to form thiamine monophosphate (TMP). The sequence is that of Thiamine-phosphate synthase from Thermobifida fusca (strain YX).